We begin with the raw amino-acid sequence, 277 residues long: Shikimate dehydrogenase (NADP(+)) (277 aa).

Residues 15-17 (SLS) and T62 contribute to the shikimate site. Catalysis depends on K66, which acts as the Proton acceptor. Shikimate-binding residues include N87 and D102. NADP(+) is bound by residues 127-131 (GAGGA), 151-156 (NRTVDK), and I219. Residue Y221 participates in shikimate binding. NADP(+) is bound at residue G242.

Belongs to the shikimate dehydrogenase family. Homodimer.

It catalyses the reaction shikimate + NADP(+) = 3-dehydroshikimate + NADPH + H(+). It functions in the pathway metabolic intermediate biosynthesis; chorismate biosynthesis; chorismate from D-erythrose 4-phosphate and phosphoenolpyruvate: step 4/7. Functionally, involved in the biosynthesis of the chorismate, which leads to the biosynthesis of aromatic amino acids. Catalyzes the reversible NADPH linked reduction of 3-dehydroshikimate (DHSA) to yield shikimate (SA). The protein is Shikimate dehydrogenase (NADP(+)) of Bacillus cereus (strain ZK / E33L).